Consider the following 273-residue polypeptide: 2,3,4,5-tetrahydropyridine-2,6-dicarboxylate N-succinyltransferase (273 aa).

Residues R104 and D141 each coordinate substrate.

It belongs to the transferase hexapeptide repeat family. As to quaternary structure, homotrimer.

The protein localises to the cytoplasm. The enzyme catalyses (S)-2,3,4,5-tetrahydrodipicolinate + succinyl-CoA + H2O = (S)-2-succinylamino-6-oxoheptanedioate + CoA. It functions in the pathway amino-acid biosynthesis; L-lysine biosynthesis via DAP pathway; LL-2,6-diaminopimelate from (S)-tetrahydrodipicolinate (succinylase route): step 1/3. The protein is 2,3,4,5-tetrahydropyridine-2,6-dicarboxylate N-succinyltransferase of Aromatoleum aromaticum (strain DSM 19018 / LMG 30748 / EbN1) (Azoarcus sp. (strain EbN1)).